The following is a 97-amino-acid chain: Small, acid-soluble spore protein gamma-type (97 aa).

A compositionally biased stretch (polar residues) spans 1 to 42 (MAKQTNKTASGTSTQHVKQQNAQASKNNFGTEFGSETNVQEV). The disordered stretch occupies residues 1–97 (MAKQTNKTAS…KNQNSGKYQG (97 aa)). 2 repeats span residues 23 to 56 (QASK…KSQN) and 58 to 91 (QASK…KNQN). Positions 43-63 (KQQNAQAAANKSQNAQASKNN) are enriched in low complexity. Polar residues predominate over residues 69-78 (ASETSAQEVR). Positions 79 to 91 (QQNAQAQAKKNQN) are enriched in low complexity.

Belongs to the gamma-type SASP family.

In terms of biological role, SASP are proteins degraded in the first minutes of spore germination and provide amino acids for both new protein synthesis and metabolism. These proteins may be involved in dormant spore's high resistance to UV light. The protein is Small, acid-soluble spore protein gamma-type (sasP-B) of Priestia megaterium (Bacillus megaterium).